The following is a 410-amino-acid chain: Probable tRNA sulfurtransferase (410 aa).

One can recognise a THUMP domain in the interval 58–167 (AELTRRLQEV…RREIFVSVER (110 aa)). Residues 185–186 (LL), 210–211 (HF), arginine 267, glycine 289, and glutamine 298 each bind ATP.

It belongs to the ThiI family.

It localises to the cytoplasm. The enzyme catalyses [ThiI sulfur-carrier protein]-S-sulfanyl-L-cysteine + a uridine in tRNA + 2 reduced [2Fe-2S]-[ferredoxin] + ATP + H(+) = [ThiI sulfur-carrier protein]-L-cysteine + a 4-thiouridine in tRNA + 2 oxidized [2Fe-2S]-[ferredoxin] + AMP + diphosphate. It catalyses the reaction [ThiS sulfur-carrier protein]-C-terminal Gly-Gly-AMP + S-sulfanyl-L-cysteinyl-[cysteine desulfurase] + AH2 = [ThiS sulfur-carrier protein]-C-terminal-Gly-aminoethanethioate + L-cysteinyl-[cysteine desulfurase] + A + AMP + 2 H(+). Its pathway is cofactor biosynthesis; thiamine diphosphate biosynthesis. Catalyzes the ATP-dependent transfer of a sulfur to tRNA to produce 4-thiouridine in position 8 of tRNAs, which functions as a near-UV photosensor. Also catalyzes the transfer of sulfur to the sulfur carrier protein ThiS, forming ThiS-thiocarboxylate. This is a step in the synthesis of thiazole, in the thiamine biosynthesis pathway. The sulfur is donated as persulfide by IscS. The sequence is that of Probable tRNA sulfurtransferase from Nocardia farcinica (strain IFM 10152).